A 582-amino-acid chain; its full sequence is Threonine--tRNA ligase (582 aa).

The segment at 185 to 478 (DHRKLGKELE…LTEQYGGAFP (294 aa)) is catalytic. Zn(2+) contacts are provided by Cys-278, His-329, and His-455.

The protein belongs to the class-II aminoacyl-tRNA synthetase family. As to quaternary structure, homodimer. Zn(2+) serves as cofactor.

Its subcellular location is the cytoplasm. The enzyme catalyses tRNA(Thr) + L-threonine + ATP = L-threonyl-tRNA(Thr) + AMP + diphosphate + H(+). Its function is as follows. Catalyzes the attachment of threonine to tRNA(Thr) in a two-step reaction: L-threonine is first activated by ATP to form Thr-AMP and then transferred to the acceptor end of tRNA(Thr). Also edits incorrectly charged L-seryl-tRNA(Thr). The chain is Threonine--tRNA ligase from Dehalococcoides mccartyi (strain ATCC BAA-2266 / KCTC 15142 / 195) (Dehalococcoides ethenogenes (strain 195)).